The sequence spans 546 residues: MTTRYIFVTGGVVSSLGKGIAAASLAAILEARGLNVTIMKLDPYINVDPGTMSPTQHGEVFVTEDGAETDLDLGHYERFIRTKMNRRNNFTTGRIYEEVLRKERRGDYLGATIQVIPHITNAIKEKVLAGGEGHDVAIVEIGGTVGDIESLPFLESIRQLGVELGRDRTLFMHLTLVPFLGAAGEVKTKPTQHSVKELRSIGIAPDVLVCRGDRAIPANEKAKISLFCNVEERAVISLKDVDSIYKIPALLKAQGLDQLVTKRFGIDCKEADLAEWEKVVYQEANPVGEVTIGMVGKYIELPDAYKSVNEALKHAGLFNRVSVNIKYIDSQNVEAKGDEVLQGLDGILVPGGFGERGVEGKIMAAQFARENNLPYFGICLGMQVALIEFARHVAGLEGAHSTEFDKNTPHPVVGLITEWINEDGQVEERHEESDLGGTMRLGAQLCHLEEGTKAAAAYKSTTCVERHRHRYEVNNNYKERLEKAGLIFSGLSSDRSLVEMIELPNHPWFVAGQFHPEFTSTPRDGQPLFEGFVAAAYTYQKRDLED.

An amidoligase domain region spans residues 1–266 (MTTRYIFVTG…DQLVTKRFGI (266 aa)). A CTP-binding site is contributed by Ser14. Ser14 is a UTP binding site. ATP is bound by residues 15–20 (SLGKGI) and Asp72. Asp72 and Glu140 together coordinate Mg(2+). CTP contacts are provided by residues 147-149 (DIE), 187-192 (KTKPTQ), and Lys223. Residues 187-192 (KTKPTQ) and Lys223 each bind UTP. Position 239–241 (239–241 (KDV)) interacts with ATP. The Glutamine amidotransferase type-1 domain occupies 291-542 (TIGMVGKYIE…VAAAYTYQKR (252 aa)). Gly352 is a binding site for L-glutamine. Cys379 (nucleophile; for glutamine hydrolysis) is an active-site residue. L-glutamine is bound by residues 380-383 (LGMQ), Glu403, and Arg470. Active-site residues include His515 and Glu517.

The protein belongs to the CTP synthase family. In terms of assembly, homotetramer.

The catalysed reaction is UTP + L-glutamine + ATP + H2O = CTP + L-glutamate + ADP + phosphate + 2 H(+). The enzyme catalyses L-glutamine + H2O = L-glutamate + NH4(+). It carries out the reaction UTP + NH4(+) + ATP = CTP + ADP + phosphate + 2 H(+). It functions in the pathway pyrimidine metabolism; CTP biosynthesis via de novo pathway; CTP from UDP: step 2/2. Its activity is regulated as follows. Allosterically activated by GTP, when glutamine is the substrate; GTP has no effect on the reaction when ammonia is the substrate. The allosteric effector GTP functions by stabilizing the protein conformation that binds the tetrahedral intermediate(s) formed during glutamine hydrolysis. Inhibited by the product CTP, via allosteric rather than competitive inhibition. Catalyzes the ATP-dependent amination of UTP to CTP with either L-glutamine or ammonia as the source of nitrogen. Regulates intracellular CTP levels through interactions with the four ribonucleotide triphosphates. This Shewanella halifaxensis (strain HAW-EB4) protein is CTP synthase.